Here is a 200-residue protein sequence, read N- to C-terminus: Alpha/beta-tubulin-N-acetyltransferase 9 (200 aa).

The region spanning 34 to 181 (ETLRELTASE…HEVTLERPIT (148 aa)) is the N-acetyltransferase domain.

The protein belongs to the acetyltransferase family. GNAT subfamily. In terms of assembly, interacts with microtubules as well as alpha/beta-tubulin heterodimers.

The protein localises to the nucleus. Its subcellular location is the cytoplasm. It localises to the cytoskeleton. The protein resides in the spindle. It is found in the spindle pole. It catalyses the reaction N-terminal L-methionyl-[tubulin] + acetyl-CoA = N-terminal N(alpha)-acetyl-L-methionyl-[tubulin] + CoA + H(+). Functionally, N-acetyltransferase that mediates the acetylation of the N-terminal residues of alpha- and beta-tubulin. Required for microtubule stability and inhibition of JNK signaling to promote cell survival during development, possibly acting independently of its N-acetyltransferase activity. Necessary for the stabilization of spindle microtubules and for mitosis progression. Regulates microtubule stability by inhibiting Spastin-mediated depolymerization and promoting Eb1-mediated polymerization. In Drosophila melanogaster (Fruit fly), this protein is Alpha/beta-tubulin-N-acetyltransferase 9.